A 61-amino-acid chain; its full sequence is Alpha-conotoxine-like Am1.3 (61 aa).

Residues 1-21 (MGMRMMFTVFLLVVLATTVVS) form the signal peptide. A propeptide spanning residues 22–44 (FMSGRASHGRNAAASDLIALTIK) is cleaved from the precursor. At Cys60 the chain carries Cysteine amide.

Belongs to the conotoxin A superfamily. Is not hydroxylated. Post-translationally, contains 2 disulfide bonds. In terms of tissue distribution, expressed by the venom duct.

The protein localises to the secreted. Functionally, alpha-conotoxins act on postsynaptic membranes, they bind to the nicotinic acetylcholine receptors (nAChR) and thus inhibit them. The sequence is that of Alpha-conotoxine-like Am1.3 from Conus amadis (Amadis cone).